The sequence spans 75 residues: uncharacterized protein (75 aa).

The first 18 residues, 1-18 (MRKYLSARSMCCSFFSCA), serve as a signal peptide directing secretion.

This is an uncharacterized protein from Treponema pallidum (strain Nichols).